A 147-amino-acid polypeptide reads, in one-letter code: Large ribosomal subunit protein bL9 (147 aa).

The protein belongs to the bacterial ribosomal protein bL9 family.

Its function is as follows. Binds to the 23S rRNA. The chain is Large ribosomal subunit protein bL9 from Myxococcus xanthus (strain DK1622).